The chain runs to 208 residues: MGIFVVIEGIDGAGKSTQAKLLAKWFEKKGYEVILTKEPTDTAFGKLIRKLVLTGGREGIIDGARISHEAEALLFAADRAEHVHKLIKPALESGKVVISDRYFYSSLAYQWARGLDLQWLIDLNRFAVRPDLVVLLDLPVKESMRRINGRSIKTEFDKIVELQKRVRENYLKLAEMFPEIRIVNAQNSIEDIHRDIVGLVEQEILSGI.

ATP is bound at residue 9–16 (GIDGAGKS).

The protein belongs to the thymidylate kinase family.

The enzyme catalyses dTMP + ATP = dTDP + ADP. This chain is Probable thymidylate kinase, found in Thermococcus gammatolerans (strain DSM 15229 / JCM 11827 / EJ3).